A 39-amino-acid polypeptide reads, in one-letter code: Bomanin Short 3 (39 aa).

A signal peptide spans 1-18; sequence MKFLSLAFVLGLLALANA. Residues 19–23 constitute a propeptide that is removed on maturation; the sequence is TPLNP. An intrachain disulfide couples cysteine 32 to cysteine 35.

Belongs to the bomanin family. Hemolymph (at protein level).

It localises to the secreted. Functionally, secreted immune-induced peptide induced by Toll signaling. Has a role in resistance bacterial and fungal infections. The strength of antimicrobial activity appears to correlate with the overall level of expression. Has no activity against the fungus C.glabrata in vitro. The chain is Bomanin Short 3 from Drosophila melanogaster (Fruit fly).